The primary structure comprises 110 residues: Inner membrane protein YgiZ (110 aa).

At 1 to 8 the chain is on the cytoplasmic side; it reads MLKQKIKT. A helical transmembrane segment spans residues 9 to 29; sequence IFEALLYIMLTYWLIDSFFAF. Topologically, residues 30-53 are periplasmic; it reads NKYDWMLESGGNICSIPSVSGEDR. Residues 54 to 74 form a helical membrane-spanning segment; that stretch reads ILQAMIAAFFLLTPLIILILR. Over 75–83 the chain is Cytoplasmic; sequence KLFMREMFE. A helical transmembrane segment spans residues 84–104; the sequence is FWVYVFSLGICLVCGWWLFWG. Topologically, residues 105 to 110 are periplasmic; sequence RFIFCY.

Its subcellular location is the cell inner membrane. The polypeptide is Inner membrane protein YgiZ (ygiZ) (Escherichia coli (strain K12)).